Consider the following 108-residue polypeptide: MAKSRILKGDVVKVIAGSHKGQIGPITSITKDKQWVSVQGITVKKHVKPTNEDSEGGIKDIPAKLHISNVALQDPKNKDQVTKVGFEIIDGKKVRIARKSKTQIKTAK.

Belongs to the universal ribosomal protein uL24 family. In terms of assembly, part of the 50S ribosomal subunit.

In terms of biological role, one of two assembly initiator proteins, it binds directly to the 5'-end of the 23S rRNA, where it nucleates assembly of the 50S subunit. Functionally, one of the proteins that surrounds the polypeptide exit tunnel on the outside of the subunit. This chain is Large ribosomal subunit protein uL24, found in Mycoplasma capricolum subsp. capricolum (strain California kid / ATCC 27343 / NCTC 10154).